We begin with the raw amino-acid sequence, 384 residues long: MARGEKGRGEGPAKSALRKVRTATLVINLARGWQQWANENSTRQAQEPTGWMPGGARESDQPSGPVIHPTTHQKVQSAPKSPSPKPGGYGAGQSSEGATEVSPIKRKEVTKTIVSKAYERGGDVSHLSHRYEKDGDEPEPEQPESDIDRLLRSHGSPTRRRKCANLVSELTKGWKEMEQEEQEELKCRSDSIDTEDSGYGGETEERPEQDGEQVAIARIKRPLPSQANRFTEKLNCKAQRKYSQVGHLKGRWQQWADEHIQSQKLNPFSDEFDYELAMSTRLHKGDEGYGRPKEGTRTAERAKRAEEHIYREIMDMCFIIRTMAHPRRDGKIQVTFGDLFDRYVRISDKVVGILMRARKHGLVDFEGEMLWQGRDDHVVITLLK.

Positions 1–11 are enriched in basic and acidic residues; it reads MARGEKGRGEG. Disordered stretches follow at residues 1 to 20, 32 to 159, and 181 to 211; these read MARGEKGRGEGPAKSALRKV, GWQQ…SPTR, and EQEELKCRSDSIDTEDSGYGGETEERPEQDG. The segment covering 35–47 has biased composition (polar residues); sequence QWANENSTRQAQE. The span at 134–145 shows a compositional bias: acidic residues; the sequence is DGDEPEPEQPES. Residues S156 and S191 each carry the phosphoserine modification. Actin-binding regions lie at residues 202–302 and 303–384; these read ETEE…AERA and KRAE…TLLK. Interaction with actin stretches follow at residues 243-288 and 355-384; these read SQVG…GDEG and MRARKHGLVDFEGEMLWQGRDDHVVITLLK.

In terms of assembly, binds F-actin and ABLIM1, ABLIM2 and ABLIM3. Interaction with ABLIM2 and ABLIM3 enhances activity. In terms of tissue distribution, specifically expressed in heart and skeletal muscles.

Its subcellular location is the cytoplasm. The protein localises to the myofibril. It is found in the sarcomere. It localises to the cytoskeleton. Functionally, acts as an activator of serum response factor (SRF)-dependent transcription possibly by inducing nuclear translocation of MKL1 or MKL2 and through a mechanism requiring Rho-actin signaling. This Sus scrofa (Pig) protein is Actin-binding Rho-activating protein (ABRA).